We begin with the raw amino-acid sequence, 151 residues long: 3-hydroxyacyl-[acyl-carrier-protein] dehydratase FabZ (151 aa).

The active site involves histidine 56.

The protein belongs to the thioester dehydratase family. FabZ subfamily.

It localises to the cytoplasm. The catalysed reaction is a (3R)-hydroxyacyl-[ACP] = a (2E)-enoyl-[ACP] + H2O. Functionally, involved in unsaturated fatty acids biosynthesis. Catalyzes the dehydration of short chain beta-hydroxyacyl-ACPs and long chain saturated and unsaturated beta-hydroxyacyl-ACPs. In Rhodopseudomonas palustris (strain BisB18), this protein is 3-hydroxyacyl-[acyl-carrier-protein] dehydratase FabZ.